The sequence spans 265 residues: 3-methyl-2-oxobutanoate hydroxymethyltransferase (265 aa).

Residues aspartate 41 and aspartate 80 each coordinate Mg(2+). 3-methyl-2-oxobutanoate contacts are provided by residues 41–42 (DS), aspartate 80, and lysine 109. Glutamate 111 is a binding site for Mg(2+). Glutamate 178 serves as the catalytic Proton acceptor.

The protein belongs to the PanB family. Homodecamer; pentamer of dimers. Mg(2+) is required as a cofactor.

The protein localises to the cytoplasm. The catalysed reaction is 3-methyl-2-oxobutanoate + (6R)-5,10-methylene-5,6,7,8-tetrahydrofolate + H2O = 2-dehydropantoate + (6S)-5,6,7,8-tetrahydrofolate. The protein operates within cofactor biosynthesis; (R)-pantothenate biosynthesis; (R)-pantoate from 3-methyl-2-oxobutanoate: step 1/2. Catalyzes the reversible reaction in which hydroxymethyl group from 5,10-methylenetetrahydrofolate is transferred onto alpha-ketoisovalerate to form ketopantoate. The chain is 3-methyl-2-oxobutanoate hydroxymethyltransferase from Thermosipho africanus (strain TCF52B).